The sequence spans 188 residues: EP300-interacting inhibitor of differentiation 1 (188 aa).

Residues 1 to 122 (MSEMAELSEL…PEEEQLSGAG (122 aa)) form a disordered region. 2 stretches are compositionally biased toward acidic residues: residues 53 to 64 (LEEEGPMEEEEA) and 94 to 117 (FESE…EEEQ). The tract at residues 55-121 (EEGPMEEEEA…YPEEEQLSGA (67 aa)) is interaction with NR0B2. An LXCXE motif motif is present at residues 179-183 (LGCDE).

Interacts via its LXCXE motif with the entire pocket region of RB1. Interacts with EP300, NR0B2 and TRIM27.

It is found in the nucleus. It localises to the cytoplasm. Its function is as follows. Interacts with RB1 and EP300 and acts as a repressor of MYOD1 transactivation. Inhibits EP300 and CBP histone acetyltransferase activity. May be involved in coupling cell cycle exit to the transcriptional activation of genes required for cellular differentiation. May act as a candidate coinhibitory factor for NR0B2 that can be directly linked to transcription inhibitory mechanisms. The sequence is that of EP300-interacting inhibitor of differentiation 1 from Pongo abelii (Sumatran orangutan).